Reading from the N-terminus, the 159-residue chain is Small ribosomal subunit protein uS9 (159 aa).

The protein belongs to the universal ribosomal protein uS9 family.

This chain is Small ribosomal subunit protein uS9, found in Rickettsia rickettsii (strain Iowa).